The sequence spans 498 residues: MRTNPTTSRPGISTIEEKSVGRIDQIIGPVLDITFPPGKLPYIYNALIVKSRDTADKQINVTCEVQQLLGNNRVRAVAMSATEGLMRGMEVIDTGTPLSVPVGGATLGRIFNVLGEPIDNLGPVDTSATFPIHRSAPAFIELDTKLSIFETGIKVVDLLAPYRRGGKIGLFGGAGVGKTVLIMELINNIAKAHGGVSVFGGVGERTREGNDLYMEMKESGVINEKNIEESKVALVYGQMNEPPGARMRVGLTALTMAEYFRDVNKQDVLLFIDNIFRFVQAGSEVSALLGRMPSAVGYQPTLSTEMGSLQERITSTKKGSITSIQAVYVPADDLTDPAPATTFAHLDATTVLSRGLASKGIYPAVDPLDSTSTMLQPRIVGNEHYETAQRVKETLQRYKELQDIIAILGLDELSEEDRLTVARARKIERFLSQPFFVAEVFTGSPGKYVGLAETIRGFQLILSGELDGLPEQAFYLVGNIDEASTKAINLEEESKLKK.

ATP is bound at residue G172–T179.

The protein belongs to the ATPase alpha/beta chains family. As to quaternary structure, F-type ATPases have 2 components, CF(1) - the catalytic core - and CF(0) - the membrane proton channel. CF(1) has five subunits: alpha(3), beta(3), gamma(1), delta(1), epsilon(1). CF(0) has four main subunits: a(1), b(1), b'(1) and c(9-12).

It localises to the plastid. The protein resides in the chloroplast thylakoid membrane. It carries out the reaction ATP + H2O + 4 H(+)(in) = ADP + phosphate + 5 H(+)(out). Produces ATP from ADP in the presence of a proton gradient across the membrane. The catalytic sites are hosted primarily by the beta subunits. This chain is ATP synthase subunit beta, chloroplastic, found in Zea mays (Maize).